Consider the following 224-residue polypeptide: Polyadenylate-binding protein 2 (224 aa).

Residues 1-36 show a composition bias toward acidic residues; it reads MADEDITLNEDQLLESLEETNGEQETEIATEVEEEG. A disordered region spans residues 1–40; the sequence is MADEDITLNEDQLLESLEETNGEQETEIATEVEEEGSMQI. Residues 9 to 74 adopt a coiled-coil conformation; it reads NEDQLLESLE…QSEVDKQMAG (66 aa). The region spanning 96-173 is the RRM domain; that stretch reads RSVYVGNVDY…RQIKVMSKRT (78 aa).

Interacts with ZC3H3. Expressed ubiquitously in all transcriptionally active cells.

It is found in the nucleus. Its subcellular location is the cytoplasm. In terms of biological role, involved in the 3'-end formation of mRNA precursors (pre-mRNA) by the addition of a poly(A) tail of 200-250 nt to the upstream cleavage product. Stimulates poly(A) polymerase (PAPOLA) conferring processivity on the poly(A) tail elongation reaction and also controls the poly(A) tail length. Increases the affinity of poly(A) polymerase for RNA. Binds to poly(A) and to poly(G) with high affinity. May protect the poly(A) tail from degradation. Plays a role in the positive regulation of alpha-1,3 fucosylation, possibly by cooperating with swm which regulates nuclear export of fucosyltransferase FucTA. Involved in germline stem cell transit amplification, differentiation and mitosis-to-meiosis transition. This Drosophila melanogaster (Fruit fly) protein is Polyadenylate-binding protein 2.